The sequence spans 573 residues: Myrcene synthase TPS5FN (573 aa).

(2E)-geranyl diphosphate-binding residues include R286, D323, D327, R464, and D467. Positions 323 and 327 each coordinate Mg(2+). Residues 323 to 327 carry the DDXXD motif motif; the sequence is DDIFD. Positions 467, 471, and 475 each coordinate Mg(2+).

The protein belongs to the terpene synthase family. Tpsb subfamily. Mg(2+) is required as a cofactor. Requires Mn(2+) as cofactor. As to expression, expressed in glandular trichomes two to four weeks after flowering onset.

The catalysed reaction is (2E)-geranyl diphosphate = beta-myrcene + diphosphate. The enzyme catalyses (2E)-geranyl diphosphate = (1R,5R)-alpha-pinene + diphosphate. It carries out the reaction (2E)-geranyl diphosphate = sabinene + diphosphate. It catalyses the reaction (2E)-geranyl diphosphate = (4S)-limonene + diphosphate. The catalysed reaction is (2E)-geranyl diphosphate = terpinolene + diphosphate. The enzyme catalyses (2E)-geranyl diphosphate = camphene + diphosphate. The protein operates within secondary metabolite biosynthesis; terpenoid biosynthesis. In terms of biological role, involved in monoterpene (C10) olefins biosynthesis, constituants of cannabinoids and terpenoids-rich resins. Catalyzes mainly the conversion of (2E)-geranyl diphosphate to beta-myrcene, and also produces minor products such as alpha-pinene, camphene, sabinene, limonene and terpinolene. The chain is Myrcene synthase TPS5FN from Cannabis sativa (Hemp).